A 387-amino-acid polypeptide reads, in one-letter code: Succinyl-diaminopimelate desuccinylase (387 aa).

Zn(2+) is bound at residue H73. The active site involves D75. D106 contributes to the Zn(2+) binding site. E141 functions as the Proton acceptor in the catalytic mechanism. Zn(2+) contacts are provided by E142, E170, and H359.

It belongs to the peptidase M20A family. DapE subfamily. As to quaternary structure, homodimer. Zn(2+) serves as cofactor. Co(2+) is required as a cofactor.

The catalysed reaction is N-succinyl-(2S,6S)-2,6-diaminopimelate + H2O = (2S,6S)-2,6-diaminopimelate + succinate. The protein operates within amino-acid biosynthesis; L-lysine biosynthesis via DAP pathway; LL-2,6-diaminopimelate from (S)-tetrahydrodipicolinate (succinylase route): step 3/3. Its function is as follows. Catalyzes the hydrolysis of N-succinyl-L,L-diaminopimelic acid (SDAP), forming succinate and LL-2,6-diaminopimelate (DAP), an intermediate involved in the bacterial biosynthesis of lysine and meso-diaminopimelic acid, an essential component of bacterial cell walls. In Methylorubrum populi (strain ATCC BAA-705 / NCIMB 13946 / BJ001) (Methylobacterium populi), this protein is Succinyl-diaminopimelate desuccinylase.